Here is a 397-residue protein sequence, read N- to C-terminus: GDNF family receptor alpha-3 (397 aa).

A signal peptide spans 1–28 (MGLSWSPRPPLLMILLLVLSLWLPLGAG). Cys48 and Cys54 are oxidised to a cystine. 2 N-linked (GlcNAc...) asparagine glycosylation sites follow: Asn92 and Asn145. 10 disulfides stabilise this stretch: Cys159–Cys215, Cys166–Cys172, Cys183–Cys193, Cys188–Cys236, Cys217–Cys224, Cys245–Cys313, Cys252–Cys258, Cys269–Cys285, Cys278–Cys337, and Cys315–Cys325. A glycan (N-linked (GlcNAc...) asparagine) is linked at Asn306. Residue Asn371 is the site of GPI-anchor amidated asparagine attachment. Positions 372–397 (PALRLQPRLPILSFSILPLILLQTLW) are cleaved as a propeptide — removed in mature form.

It belongs to the GDNFR family. As to quaternary structure, interacts with ARTN ligand and RET: forms a 2:2:2 ternary complex composed of ARTN ligand, GFRA3 and RET receptor. Interacts with SORL1.

Its subcellular location is the cell membrane. Receptor for artemin (ARTN), a growth factor that supports the survival of sensory and sympathetic peripheral neurons. ARTN-binding leads to autophosphorylation and activation of the RET receptor. The chain is GDNF family receptor alpha-3 (Gfra3) from Mus musculus (Mouse).